The chain runs to 491 residues: Calcium/calmodulin-dependent protein kinase type II delta 1 chain (491 aa).

In terms of domain architecture, Protein kinase spans 13-271 (YQLYEELGKG…AAEALKHPWI (259 aa)). ATP contacts are provided by residues 19–27 (LGKGAFSVV) and Lys42. Asp135 acts as the Proton acceptor in catalysis. Thr286 is subject to Phosphothreonine. Ser314 is subject to Phosphoserine. The tract at residues 315–354 (SKNPYKKPDGVKEPQTTVIHNPTDGNKESSESTNTTIEDE) is disordered. Residues 328–338 (PQTTVIHNPTD) show a composition bias toward polar residues. Thr350 is subject to Phosphothreonine.

It belongs to the protein kinase superfamily. CAMK Ser/Thr protein kinase family. CaMK subfamily. As to quaternary structure, CAMK2 is composed of four different chains: alpha, beta, gamma, and delta. The different isoforms assemble into homo- or heteromultimeric holoenzymes composed of 8 to 12 subunits. In terms of tissue distribution, first detected at the 18-somite stage where expression is restricted to somite boundaries. At 24 hpf, expression is elevated in epidermal tissue and in the hatching gland. After 24 hpf, expression dimishes, but persists at low levels along the dorsal trunk. At 48 hpf, expression is restricted at a low level to the forebrain. At 72 hpf, weak expression reappears along the entire dorsal trunk in discrete cell bodies.

It catalyses the reaction L-seryl-[protein] + ATP = O-phospho-L-seryl-[protein] + ADP + H(+). The enzyme catalyses L-threonyl-[protein] + ATP = O-phospho-L-threonyl-[protein] + ADP + H(+). Its activity is regulated as follows. Autophosphorylation of CAMK2 plays an important role in the regulation of the kinase activity. Functionally, caM-kinase II (CAMK2) is a prominent kinase in the central nervous system. This Danio rerio (Zebrafish) protein is Calcium/calmodulin-dependent protein kinase type II delta 1 chain.